The primary structure comprises 314 residues: Acetaldehyde dehydrogenase 1 (314 aa).

Residue 15 to 18 coordinates NAD(+); sequence SGNI. Cys-133 functions as the Acyl-thioester intermediate in the catalytic mechanism. NAD(+) is bound by residues 164-172 and Asn-291; that span reads SAGPGTRAN.

It belongs to the acetaldehyde dehydrogenase family.

The enzyme catalyses acetaldehyde + NAD(+) + CoA = acetyl-CoA + NADH + H(+). The sequence is that of Acetaldehyde dehydrogenase 1 from Paraburkholderia xenovorans (strain LB400).